Consider the following 435-residue polypeptide: Apparent malate synthase (435 aa).

Residues glutamate 159 and asparagine 180 each coordinate Mg(2+). Position 159 (glutamate 159) interacts with substrate.

The protein belongs to the HpcH/HpaI aldolase family. Mg(2+) is required as a cofactor. Requires Mn(2+) as cofactor. The cofactor is Co(2+). Ca(2+) serves as cofactor.

The enzyme catalyses (S)-malyl-CoA = glyoxylate + acetyl-CoA. The catalysed reaction is (S)-malyl-CoA + H2O = (S)-malate + CoA + H(+). Functionally, involved in the methylaspartate cycle. Catalyzes the biosynthesis of malate in two steps. In the first reaction acetyl-CoA is condensed reversibly with glyoxylate to form (S)-malyl-CoA. In the second reaction (S)-malyl-CoA is hydrolyzed to malate and CoA. It can also catalyze the condensation of propionyl-CoA with glyoxylate and of acetyl-CoA with pyruvate, however the CoA-ester hydrolysis reaction is highly specific for (S)-malyl-CoA. In Haloarcula marismortui (strain ATCC 43049 / DSM 3752 / JCM 8966 / VKM B-1809) (Halobacterium marismortui), this protein is Apparent malate synthase (aceB).